The chain runs to 441 residues: Serine--tRNA ligase (441 aa).

250–252 (TSE) serves as a coordination point for L-serine. ATP is bound by residues 281–283 (RRE) and V297. E304 contacts L-serine. Residue 368-371 (EIVS) participates in ATP binding. T402 contributes to the L-serine binding site.

It belongs to the class-II aminoacyl-tRNA synthetase family. Type-1 seryl-tRNA synthetase subfamily. As to quaternary structure, homodimer. The tRNA molecule binds across the dimer.

It localises to the cytoplasm. The enzyme catalyses tRNA(Ser) + L-serine + ATP = L-seryl-tRNA(Ser) + AMP + diphosphate + H(+). It carries out the reaction tRNA(Sec) + L-serine + ATP = L-seryl-tRNA(Sec) + AMP + diphosphate + H(+). It participates in aminoacyl-tRNA biosynthesis; selenocysteinyl-tRNA(Sec) biosynthesis; L-seryl-tRNA(Sec) from L-serine and tRNA(Sec): step 1/1. Its function is as follows. Catalyzes the attachment of serine to tRNA(Ser). Is also able to aminoacylate tRNA(Sec) with serine, to form the misacylated tRNA L-seryl-tRNA(Sec), which will be further converted into selenocysteinyl-tRNA(Sec). The chain is Serine--tRNA ligase from Thermoplasma volcanium (strain ATCC 51530 / DSM 4299 / JCM 9571 / NBRC 15438 / GSS1).